Here is a 497-residue protein sequence, read N- to C-terminus: Probable cytosol aminopeptidase (497 aa).

Mn(2+) is bound by residues K263 and D268. K275 is a catalytic residue. Positions 286, 345, and 347 each coordinate Mn(2+). R349 is an active-site residue.

Belongs to the peptidase M17 family. It depends on Mn(2+) as a cofactor.

It is found in the cytoplasm. The catalysed reaction is Release of an N-terminal amino acid, Xaa-|-Yaa-, in which Xaa is preferably Leu, but may be other amino acids including Pro although not Arg or Lys, and Yaa may be Pro. Amino acid amides and methyl esters are also readily hydrolyzed, but rates on arylamides are exceedingly low.. The enzyme catalyses Release of an N-terminal amino acid, preferentially leucine, but not glutamic or aspartic acids.. In terms of biological role, presumably involved in the processing and regular turnover of intracellular proteins. Catalyzes the removal of unsubstituted N-terminal amino acids from various peptides. The chain is Probable cytosol aminopeptidase from Brucella suis biovar 1 (strain 1330).